The primary structure comprises 493 residues: Galactose-1-phosphate uridylyltransferase (493 aa).

This sequence belongs to the galactose-1-phosphate uridylyltransferase type 2 family.

It is found in the cytoplasm. The enzyme catalyses alpha-D-galactose 1-phosphate + UDP-alpha-D-glucose = alpha-D-glucose 1-phosphate + UDP-alpha-D-galactose. It functions in the pathway carbohydrate metabolism; galactose metabolism. This is Galactose-1-phosphate uridylyltransferase (galT) from Lactococcus lactis subsp. lactis (strain IL1403) (Streptococcus lactis).